Here is a 239-residue protein sequence, read N- to C-terminus: Skn-1 dependent zygotic transcript 1 protein (239 aa).

As to expression, expressed in mesendodermal precursor cells of embryos.

May have a role in mesendoderm development during embryogenesis. The polypeptide is Skn-1 dependent zygotic transcript 1 protein (sdz-1) (Caenorhabditis elegans).